Here is a 434-residue protein sequence, read N- to C-terminus: Alpha-enolase (434 aa).

A Mg(2+)-binding site is contributed by Ser40. Residues His158 and Glu167 each contribute to the substrate site. Glu210 acts as the Proton donor in catalysis. Residues Asp245, Glu293, and Asp318 each contribute to the Mg(2+) site. The substrate site is built by Glu293 and Asp318. Lys343 serves as the catalytic Proton acceptor. Substrate-binding positions include Ser370–Ser373 and Lys394.

This sequence belongs to the enolase family. In terms of assembly, homodimer. Mg(2+) is required as a cofactor.

The protein resides in the cytoplasm. The enzyme catalyses (2R)-2-phosphoglycerate = phosphoenolpyruvate + H2O. Its pathway is carbohydrate degradation; glycolysis; pyruvate from D-glyceraldehyde 3-phosphate: step 4/5. The chain is Alpha-enolase from Python regius (Ball python).